We begin with the raw amino-acid sequence, 187 residues long: Large ribosomal subunit protein uL10 (187 aa).

The protein belongs to the universal ribosomal protein uL10 family. Part of the ribosomal stalk of the 50S ribosomal subunit. The N-terminus interacts with L11 and the large rRNA to form the base of the stalk. The C-terminus forms an elongated spine to which L12 dimers bind in a sequential fashion forming a multimeric L10(L12)X complex.

Forms part of the ribosomal stalk, playing a central role in the interaction of the ribosome with GTP-bound translation factors. The protein is Large ribosomal subunit protein uL10 of Synechococcus sp. (strain JA-3-3Ab) (Cyanobacteria bacterium Yellowstone A-Prime).